A 174-amino-acid chain; its full sequence is Large ribosomal subunit protein uL18 (174 aa).

It belongs to the universal ribosomal protein uL18 family. As to quaternary structure, part of the 50S ribosomal subunit. Contacts the 5S and 23S rRNAs.

Its function is as follows. This is one of the proteins that bind and probably mediate the attachment of the 5S RNA into the large ribosomal subunit, where it forms part of the central protuberance. This is Large ribosomal subunit protein uL18 from Methanosarcina barkeri (strain Fusaro / DSM 804).